The following is a 39-amino-acid chain: Potassium channel toxin alpha-KTx 2.1 (39 aa).

3 disulfide bridges follow: cysteine 7/cysteine 29, cysteine 13/cysteine 34, and cysteine 17/cysteine 36. An interaction with Ca(2+)-activated K(+) channels region spans residues 26–34 (GAKCMNGKC). Asparagine amide is present on asparagine 39.

The protein belongs to the short scorpion toxin superfamily. Potassium channel inhibitor family. Alpha-KTx 02 subfamily. In terms of tissue distribution, expressed by the venom gland.

The protein localises to the secreted. In terms of biological role, blocks voltage-gated potassium channels (mKv1.1/KCNA1 (Kd&gt;25 nM), rKv1.2/KCNA2 (Kd=2 nM), mKv1.3/KCNA3 (Kd=1 nM), hKv1.5/KCNA5 (Kd&gt;25 nM) and mKv3.1/KCNC1 (Kd&gt;25 nM)) and calcium-activated potassium channels (KCa1.1/KCNMA1 and KCa3.1/KCNN4, Kd&gt;25 nM). The chain is Potassium channel toxin alpha-KTx 2.1 from Centruroides noxius (Mexican scorpion).